The sequence spans 305 residues: DNA-directed RNA polymerase 35 kDa subunit (305 aa).

Belongs to the poxviridae DNA-directed RNA polymerase 35 kDa subunit family. The DNA-dependent RNA polymerase used for intermediate and late genes expression consists of eight subunits 147 kDa, 133 kDa, 35 kDa, 30 kDa, 22 kDa, 19 kDa, 18 kDa and 7 kDa totalling more than 500 kDa in mass. The same holoenzyme, with the addition of the transcription-specificity factor RAP94, is used for early gene expression.

It is found in the virion. The enzyme catalyses RNA(n) + a ribonucleoside 5'-triphosphate = RNA(n+1) + diphosphate. In terms of biological role, part of the DNA-dependent RNA polymerase which catalyzes the transcription of viral DNA into RNA using the four ribonucleoside triphosphates as substrates. Responsible for the transcription of early, intermediate and late genes. DNA-dependent RNA polymerase associates with the early transcription factor (ETF), itself composed of D6 and A7, thereby allowing the early genes transcription. Late transcription, and probably also intermediate transcription, require newly synthesized RNA polymerase. The protein is DNA-directed RNA polymerase 35 kDa subunit (RPO35) of Homo sapiens (Human).